We begin with the raw amino-acid sequence, 177 residues long: Large ribosomal subunit protein uL6 (177 aa).

The protein belongs to the universal ribosomal protein uL6 family. Part of the 50S ribosomal subunit.

Functionally, this protein binds to the 23S rRNA, and is important in its secondary structure. It is located near the subunit interface in the base of the L7/L12 stalk, and near the tRNA binding site of the peptidyltransferase center. This is Large ribosomal subunit protein uL6 from Serratia proteamaculans (strain 568).